Consider the following 558-residue polypeptide: Dimethylaniline monooxygenase [N-oxide-forming] 4 (558 aa).

FAD contacts are provided by residues 9–13 (GAGVS), Glu32, and 40–41 (LW). Residues 60–61 (TN) and 195–198 (TGGD) contribute to the NADP(+) site. The chain crosses the membrane as a helical span at residues 517-537 (AWGAPVLLASLLLICKSSLFL).

It belongs to the FMO family. FAD is required as a cofactor. As to expression, liver.

It is found in the microsome membrane. Its subcellular location is the endoplasmic reticulum membrane. It catalyses the reaction N,N-dimethylaniline + NADPH + O2 + H(+) = N,N-dimethylaniline N-oxide + NADP(+) + H2O. This protein is involved in the oxidative metabolism of a variety of xenobiotics such as drugs and pesticides. The sequence is that of Dimethylaniline monooxygenase [N-oxide-forming] 4 (FMO4) from Homo sapiens (Human).